Consider the following 237-residue polypeptide: Ribonuclease PH (237 aa).

Phosphate contacts are provided by residues R86 and 124–126; that span reads GTR.

It belongs to the RNase PH family. In terms of assembly, homohexameric ring arranged as a trimer of dimers.

It catalyses the reaction tRNA(n+1) + phosphate = tRNA(n) + a ribonucleoside 5'-diphosphate. Its function is as follows. Phosphorolytic 3'-5' exoribonuclease that plays an important role in tRNA 3'-end maturation. Removes nucleotide residues following the 3'-CCA terminus of tRNAs; can also add nucleotides to the ends of RNA molecules by using nucleoside diphosphates as substrates, but this may not be physiologically important. Probably plays a role in initiation of 16S rRNA degradation (leading to ribosome degradation) during starvation. The chain is Ribonuclease PH from Rhodopseudomonas palustris (strain HaA2).